The chain runs to 159 residues: Transcriptional repressor NrdR (159 aa).

A zinc finger lies at 3–34; that stretch reads CPFCGAEDTSVVDSRISEEGARIRRRRRCVEC. In terms of domain architecture, ATP-cone spans 49–139; it reads PQVIKQDGNR…VYRSFEDVGD (91 aa).

This sequence belongs to the NrdR family. Zn(2+) is required as a cofactor.

Its function is as follows. Negatively regulates transcription of bacterial ribonucleotide reductase nrd genes and operons by binding to NrdR-boxes. The chain is Transcriptional repressor NrdR from Nitrosomonas europaea (strain ATCC 19718 / CIP 103999 / KCTC 2705 / NBRC 14298).